The sequence spans 1355 residues: Probable aldehyde oxidase 2 (1355 aa).

Residues 9-96 (RPVVVTVNGE…HCAVTTSEGI (88 aa)) form the 2Fe-2S ferredoxin-type domain. The [2Fe-2S] cluster site is built by C48, C53, C56, and C78. Residues 244–422 (VAVTGDGWFH…VSISIPDWGS (179 aa)) enclose the FAD-binding PCMH-type domain. Residues 544-577 (PENANVPNGSCTNGTANGSANSSPEKHSNVDSSD) are disordered. Positions 548 to 566 (NVPNGSCTNGTANGSANSS) are enriched in polar residues.

This sequence belongs to the xanthine dehydrogenase family. In terms of assembly, aldehyde oxidases (AO) are homodimers and heterodimers of AO subunits. [2Fe-2S] cluster is required as a cofactor. FAD serves as cofactor. The cofactor is Mo-molybdopterin.

The enzyme catalyses an aldehyde + O2 + H2O = a carboxylate + H2O2 + H(+). This chain is Probable aldehyde oxidase 2, found in Oryza sativa subsp. japonica (Rice).